A 156-amino-acid chain; its full sequence is H/ACA ribonucleoprotein complex subunit 2-like protein (156 aa).

This sequence belongs to the eukaryotic ribosomal protein eL8 family. In terms of assembly, component of the small nucleolar ribonucleoprotein particle containing H/ACA-type snoRNAs (H/ACA snoRNPs).

Its subcellular location is the nucleus. The protein localises to the nucleolus. Its function is as follows. Required for ribosome biogenesis. Part of a complex which catalyzes pseudouridylation of rRNA. This involves the isomerization of uridine such that the ribose is subsequently attached to C5, instead of the normal N1. Pseudouridine ('psi') residues may serve to stabilize the conformation of rRNAs. This chain is H/ACA ribonucleoprotein complex subunit 2-like protein, found in Arabidopsis thaliana (Mouse-ear cress).